The sequence spans 246 residues: Adenylate kinase 4 (246 aa).

N-acetylalanine is present on Ala-2. ATP is bound at residue Gly-43–Thr-48. Residues Ser-63–Val-92 are NMP. Residues Thr-64, Arg-69, Glu-90–Val-92, Gly-118–Arg-121, and Gln-125 each bind AMP. Residues Gly-159–Asp-196 are LID. Arg-160 is a binding site for ATP. Residues Arg-193 and Arg-204 each coordinate AMP.

The protein belongs to the adenylate kinase family. Monomer.

It localises to the cytoplasm. It carries out the reaction AMP + ATP = 2 ADP. Catalyzes the reversible transfer of the terminal phosphate group between ATP and AMP. Plays an important role in cellular energy homeostasis and in adenine nucleotide metabolism. This is Adenylate kinase 4 (ADK1) from Arabidopsis thaliana (Mouse-ear cress).